Reading from the N-terminus, the 243-residue chain is Type II restriction enzyme NlaIV (243 aa).

The catalysed reaction is Endonucleolytic cleavage of DNA to give specific double-stranded fragments with terminal 5'-phosphates.. In terms of biological role, a P subtype restriction enzyme that recognizes the double-stranded sequence 5'-GGNNCC-3' and cleaves after N-3. The protein is Type II restriction enzyme NlaIV (nlaIVR) of Neisseria lactamica.